The following is a 131-amino-acid chain: Single-stranded DNA-binding protein 1 (131 aa).

One can recognise an SSB domain in the interval 1–103 (MYNKVIAIGR…VLCQSFQLLE (103 aa)).

In terms of assembly, homotetramer.

This is Single-stranded DNA-binding protein 1 (ssb1) from Streptococcus pyogenes serotype M6 (strain ATCC BAA-946 / MGAS10394).